Reading from the N-terminus, the 403-residue chain is MSEKGRLFTSESVTEGHPDKICDAISDSILDALLAEDPCSRVAVETLVTTGQVHVVGEVTTLAKTAFADISNTVRERILDIGYDSSDKGFDGASCGVNIGIGAQSSDIAQGVNTAHEVRVEGAADPLDAQGAGDQGLMFGYAINDTPELMPLPIALAHRLARRLTEVRKNGVLPYLRSDGKTQVTIAYEDNVPVRLDTVVISTQHAAGVDLDATLAPDIREKVLNTVIDDLSHDTLDVSSVRVLVNPTGKFVLGGPMGDAGLTGRKIIVDTYGGWARHGGGAFSGKDPSKVDRSAAYAMRWVAKNIVAAGLAERIEVQVAYAIGKAAPVGLFVETFGTEAVDPAKIEKAIGEVFDLRPGAIIRDLHLLRPIYAQTAAYGHFGRTDVELPWEQLNKVDDLKRAI.

Residue H17 coordinates ATP. D19 serves as a coordination point for Mg(2+). A K(+)-binding site is contributed by E45. Residues E58 and Q104 each contribute to the L-methionine site. The interval 104–114 (QSSDIAQGVNT) is flexible loop. ATP contacts are provided by residues 179-181 (DGK), 250-251 (KF), D259, 265-266 (RK), A282, and K286. Residue D259 coordinates L-methionine. K290 is an L-methionine binding site.

Belongs to the AdoMet synthase family. In terms of assembly, homotetramer; dimer of dimers. Mg(2+) serves as cofactor. The cofactor is K(+).

The protein localises to the cytoplasm. The enzyme catalyses L-methionine + ATP + H2O = S-adenosyl-L-methionine + phosphate + diphosphate. Its pathway is amino-acid biosynthesis; S-adenosyl-L-methionine biosynthesis; S-adenosyl-L-methionine from L-methionine: step 1/1. Its function is as follows. Catalyzes the formation of S-adenosylmethionine (AdoMet) from methionine and ATP. The overall synthetic reaction is composed of two sequential steps, AdoMet formation and the subsequent tripolyphosphate hydrolysis which occurs prior to release of AdoMet from the enzyme. This is S-adenosylmethionine synthase from Mycobacterium leprae (strain Br4923).